A 155-amino-acid polypeptide reads, in one-letter code: 2-C-methyl-D-erythritol 2,4-cyclodiphosphate synthase (155 aa).

Asp8 and His10 together coordinate a divalent metal cation. 4-CDP-2-C-methyl-D-erythritol 2-phosphate-binding positions include 8 to 10 (DVH) and 34 to 35 (HS). His42 contributes to the a divalent metal cation binding site. 4-CDP-2-C-methyl-D-erythritol 2-phosphate is bound by residues 56 to 58 (DIG), 61 to 65 (FPDKD), 132 to 135 (TTTE), and Arg142.

The protein belongs to the IspF family. As to quaternary structure, homotrimer. A divalent metal cation serves as cofactor.

It carries out the reaction 4-CDP-2-C-methyl-D-erythritol 2-phosphate = 2-C-methyl-D-erythritol 2,4-cyclic diphosphate + CMP. Its pathway is isoprenoid biosynthesis; isopentenyl diphosphate biosynthesis via DXP pathway; isopentenyl diphosphate from 1-deoxy-D-xylulose 5-phosphate: step 4/6. In terms of biological role, involved in the biosynthesis of isopentenyl diphosphate (IPP) and dimethylallyl diphosphate (DMAPP), two major building blocks of isoprenoid compounds. Catalyzes the conversion of 4-diphosphocytidyl-2-C-methyl-D-erythritol 2-phosphate (CDP-ME2P) to 2-C-methyl-D-erythritol 2,4-cyclodiphosphate (ME-CPP) with a corresponding release of cytidine 5-monophosphate (CMP). This Desulfatibacillum aliphaticivorans protein is 2-C-methyl-D-erythritol 2,4-cyclodiphosphate synthase.